The following is a 454-amino-acid chain: tRNA modification GTPase MnmE (454 aa).

The (6S)-5-formyl-5,6,7,8-tetrahydrofolate site is built by Arg-26, Glu-84, and Lys-123. In terms of domain architecture, TrmE-type G spans 219 to 378 (GLQVVIAGKP…LVDAITAHAG (160 aa)). Asn-229 lines the K(+) pocket. GTP is bound by residues 229 to 234 (NAGKSS), 248 to 254 (TDIAGTT), and 273 to 276 (DTAG). A Mg(2+)-binding site is contributed by Ser-233. Residues Thr-248, Ile-250, and Thr-253 each coordinate K(+). Thr-254 contacts Mg(2+). Lys-454 serves as a coordination point for (6S)-5-formyl-5,6,7,8-tetrahydrofolate.

It belongs to the TRAFAC class TrmE-Era-EngA-EngB-Septin-like GTPase superfamily. TrmE GTPase family. Homodimer. Heterotetramer of two MnmE and two MnmG subunits. K(+) serves as cofactor.

The protein localises to the cytoplasm. In terms of biological role, exhibits a very high intrinsic GTPase hydrolysis rate. Involved in the addition of a carboxymethylaminomethyl (cmnm) group at the wobble position (U34) of certain tRNAs, forming tRNA-cmnm(5)s(2)U34. In Acinetobacter baumannii (strain AYE), this protein is tRNA modification GTPase MnmE.